We begin with the raw amino-acid sequence, 1624 residues long: ATP-binding cassette sub-family A member 6 (1624 aa).

A helical membrane pass occupies residues L31–A51. N-linked (GlcNAc...) asparagine glycans are attached at residues N84 and N91. The next 6 helical transmembrane spans lie at I222–V242, W267–T287, F297–L317, V326–V346, E356–F376, and V395–L415. Residues I478–F713 form the ABC transporter 1 domain. G514 to S521 is a binding site for ATP. N-linked (GlcNAc...) asparagine glycosylation is present at N576. Transmembrane regions (helical) follow at residues A854–V874, L971–H991, F1005–C1025, W1058–F1078, I1094–Y1114, W1130–F1150, L1154–L1174, and A1194–L1214. Residues L1282–R1520 form the ABC transporter 2 domain. G1320–S1327 contacts ATP.

This sequence belongs to the ABC transporter superfamily. ABCA family. As to expression, widely expressed with higher expression in heart, lung, brain, spleen and testis.

The protein resides in the golgi apparatus membrane. Functionally, probable transporter which may play a role in macrophage lipid transport and homeostasis. This chain is ATP-binding cassette sub-family A member 6 (Abca6), found in Mus musculus (Mouse).